The sequence spans 88 residues: Acyl carrier protein (88 aa).

One can recognise a Carrier domain in the interval 4 to 79 (DSVPAKVMEI…AAVDYIQNKM (76 aa)). Ser39 is subject to O-(pantetheine 4'-phosphoryl)serine.

It belongs to the acyl carrier protein (ACP) family. 4'-phosphopantetheine is transferred from CoA to a specific serine of apo-ACP by AcpS. This modification is essential for activity because fatty acids are bound in thioester linkage to the sulfhydryl of the prosthetic group.

It is found in the cytoplasm. The protein operates within lipid metabolism; fatty acid biosynthesis. Carrier of the growing fatty acid chain in fatty acid biosynthesis. In Trichodesmium erythraeum (strain IMS101), this protein is Acyl carrier protein.